We begin with the raw amino-acid sequence, 434 residues long: Glutamyl-tRNA reductase (434 aa).

Substrate-binding positions include 49 to 52 (TCNR), Ser-109, 114 to 116 (EPQ), and Gln-120. Catalysis depends on Cys-50, which acts as the Nucleophile. 189–194 (GAGEMC) contributes to the NADP(+) binding site.

It belongs to the glutamyl-tRNA reductase family. As to quaternary structure, homodimer.

It carries out the reaction (S)-4-amino-5-oxopentanoate + tRNA(Glu) + NADP(+) = L-glutamyl-tRNA(Glu) + NADPH + H(+). Its pathway is porphyrin-containing compound metabolism; protoporphyrin-IX biosynthesis; 5-aminolevulinate from L-glutamyl-tRNA(Glu): step 1/2. Functionally, catalyzes the NADPH-dependent reduction of glutamyl-tRNA(Glu) to glutamate 1-semialdehyde (GSA). The chain is Glutamyl-tRNA reductase from Trichlorobacter lovleyi (strain ATCC BAA-1151 / DSM 17278 / SZ) (Geobacter lovleyi).